We begin with the raw amino-acid sequence, 609 residues long: Threonine--tRNA ligase (609 aa).

The editing domain stretch occupies residues 1-145; that stretch reads MRLLLIHSDY…TIVPGAGAAV (145 aa). Residues 194–485 form a catalytic region; the sequence is IHVDLMRSKE…TANQSVPQLP (292 aa). The Zn(2+) site is built by Cys286, His338, and His458.

This sequence belongs to the class-II aminoacyl-tRNA synthetase family. As to quaternary structure, homodimer. It depends on Zn(2+) as a cofactor.

It is found in the cytoplasm. It carries out the reaction tRNA(Thr) + L-threonine + ATP = L-threonyl-tRNA(Thr) + AMP + diphosphate + H(+). Catalyzes the attachment of threonine to tRNA(Thr) in a two-step reaction: L-threonine is first activated by ATP to form Thr-AMP and then transferred to the acceptor end of tRNA(Thr). Also edits incorrectly charged L-seryl-tRNA(Thr). The chain is Threonine--tRNA ligase from Methanosphaerula palustris (strain ATCC BAA-1556 / DSM 19958 / E1-9c).